Reading from the N-terminus, the 115-residue chain is T cell receptor beta variable 11-2 (115 aa).

A signal peptide spans M1–A21. The Ig-like domain occupies G22–L115. A disulfide bridge connects residues C42 and C111.

As to quaternary structure, alpha-beta TR is a heterodimer composed of an alpha and beta chain; disulfide-linked. The alpha-beta TR is associated with the transmembrane signaling CD3 coreceptor proteins to form the TR-CD3 (TcR or TCR). The assembly of alpha-beta TR heterodimers with CD3 occurs in the endoplasmic reticulum where a single alpha-beta TR heterodimer associates with one CD3D-CD3E heterodimer, one CD3G-CD3E heterodimer and one CD247 homodimer forming a stable octameric structure. CD3D-CD3E and CD3G-CD3E heterodimers preferentially associate with TR alpha and TR beta chains, respectively. The association of the CD247 homodimer is the last step of TcR assembly in the endoplasmic reticulum and is required for transport to the cell surface.

The protein localises to the cell membrane. V region of the variable domain of T cell receptor (TR) beta chain that participates in the antigen recognition. Alpha-beta T cell receptors are antigen specific receptors which are essential to the immune response and are present on the cell surface of T lymphocytes. Recognize peptide-major histocompatibility (MH) (pMH) complexes that are displayed by antigen presenting cells (APC), a prerequisite for efficient T cell adaptive immunity against pathogens. Binding of alpha-beta TR to pMH complex initiates TR-CD3 clustering on the cell surface and intracellular activation of LCK that phosphorylates the ITAM motifs of CD3G, CD3D, CD3E and CD247 enabling the recruitment of ZAP70. In turn ZAP70 phosphorylates LAT, which recruits numerous signaling molecules to form the LAT signalosome. The LAT signalosome propagates signal branching to three major signaling pathways, the calcium, the mitogen-activated protein kinase (MAPK) kinase and the nuclear factor NF-kappa-B (NF-kB) pathways, leading to the mobilization of transcription factors that are critical for gene expression and essential for T cell growth and differentiation. The T cell repertoire is generated in the thymus, by V-(D)-J rearrangement. This repertoire is then shaped by intrathymic selection events to generate a peripheral T cell pool of self-MH restricted, non-autoaggressive T cells. Post-thymic interaction of alpha-beta TR with the pMH complexes shapes TR structural and functional avidity. This is T cell receptor beta variable 11-2 from Homo sapiens (Human).